A 476-amino-acid chain; its full sequence is Retinoic acid receptor gamma (476 aa).

The modulating stretch occupies residues 1–109 (MANSSKERLC…PPPPPRVYKP (109 aa)). Residues 81 to 96 (STVETQSTSSEEMVPS) show a composition bias toward low complexity. The disordered stretch occupies residues 81–102 (STVETQSTSSEEMVPSSPSPPP). 2 NR C4-type zinc fingers span residues 110 to 130 (CFVCNDKSSGYHYGVSSCEGC) and 146 to 170 (CHRDKNCQINKVTRNRCQFCRLQKC). The segment at residues 110 to 175 (CFVCNDKSSG…RLQKCFQVGM (66 aa)) is a DNA-binding region (nuclear receptor). Residues 176 to 205 (SKEAVRNDRNKKKKEIKEEVVLPDSYEMPP) are hinge. The Nuclear localization signal signature appears at 184–189 (RNKKKK). One can recognise an NR LBD domain in the interval 206-440 (EMEELIQKVS…PLIREMLENP (235 aa)). Residues 435–476 (EMLENPEAFEDGAATPKPSERSSSESSNGSPTGEDSSGSKTP) form a disordered region. Residues 462 to 476 (NGSPTGEDSSGSKTP) show a composition bias toward polar residues.

Belongs to the nuclear hormone receptor family. NR1 subfamily. Heterodimer; with a rxr molecule. Binds DNA preferentially as a rar/rxr heterodimer. In terms of tissue distribution, expressed in embryos, tadpoles and various adult tissue such as kidney, testis, brain, liver, skeletal muscle and spleen.

The protein resides in the nucleus. In terms of biological role, receptor for retinoic acid. Retinoic acid receptors bind as heterodimers to their target response elements in response to their ligands, all-trans or 9-cis retinoic acid, and regulate gene expression in various biological processes. The rar/rxr heterodimers bind to the retinoic acid response elements (RARE) composed of tandem 5'-AGGTCA-3' sites known as DR1-DR5. The sequence is that of Retinoic acid receptor gamma (rarg) from Xenopus laevis (African clawed frog).